Consider the following 344-residue polypeptide: Glyceraldehyde-3-phosphate dehydrogenase (344 aa).

NAD(+)-binding positions include 11–12 (TI) and Gly110. A D-glyceraldehyde 3-phosphate-binding site is contributed by 139-141 (SCN). The active-site Nucleophile is the Cys140. Residue Arg169 participates in NAD(+) binding. 195-196 (HG) is a binding site for D-glyceraldehyde 3-phosphate. Gln302 provides a ligand contact to NAD(+).

The protein belongs to the glyceraldehyde-3-phosphate dehydrogenase family. Homotetramer.

Its subcellular location is the cytoplasm. It carries out the reaction D-glyceraldehyde 3-phosphate + phosphate + NADP(+) = (2R)-3-phospho-glyceroyl phosphate + NADPH + H(+). It catalyses the reaction D-glyceraldehyde 3-phosphate + phosphate + NAD(+) = (2R)-3-phospho-glyceroyl phosphate + NADH + H(+). It functions in the pathway carbohydrate degradation; glycolysis; pyruvate from D-glyceraldehyde 3-phosphate: step 1/5. The polypeptide is Glyceraldehyde-3-phosphate dehydrogenase (Pyrobaculum arsenaticum (strain DSM 13514 / JCM 11321 / PZ6)).